The chain runs to 214 residues: Elongation factor Ts (214 aa).

An involved in Mg(2+) ion dislocation from EF-Tu region spans residues 80–83 (TDFV).

It belongs to the EF-Ts family.

It localises to the cytoplasm. Functionally, associates with the EF-Tu.GDP complex and induces the exchange of GDP to GTP. It remains bound to the aminoacyl-tRNA.EF-Tu.GTP complex up to the GTP hydrolysis stage on the ribosome. The sequence is that of Elongation factor Ts from Syntrophomonas wolfei subsp. wolfei (strain DSM 2245B / Goettingen).